We begin with the raw amino-acid sequence, 887 residues long: Beta-galactosidase 9 (887 aa).

An N-terminal signal peptide occupies residues M1 to G30. N37 carries an N-linked (GlcNAc...) asparagine glycan. The active-site Proton donor is E194. Catalysis depends on E263, which acts as the Nucleophile. 5 N-linked (GlcNAc...) asparagine glycosylation sites follow: N463, N485, N496, N527, and N785. In terms of domain architecture, SUEL-type lectin spans N791 to S877. N-linked (GlcNAc...) asparagine glycosylation is present at N881.

Belongs to the glycosyl hydrolase 35 family. As to expression, ubiquitous, with higher expression levels in siliques.

Its subcellular location is the secreted. The protein resides in the extracellular space. The protein localises to the apoplast. The enzyme catalyses Hydrolysis of terminal non-reducing beta-D-galactose residues in beta-D-galactosides.. The sequence is that of Beta-galactosidase 9 (BGAL9) from Arabidopsis thaliana (Mouse-ear cress).